The sequence spans 232 residues: MKSKLIILLMLVPFSSFSTENNFEINKTRVIYSDSTPSVQISNNKAYPLIVQSNIWDENNNKNHDFIATPPIFKMESESRNIIKIIKTNIKLPDSQESMRWLCIESMPPTEKSTKINRKEGRTDSINISIRGCIKLIYQPASVPSPVFNNIVEKLKWHKNGKYLVLKNNTPYYISFSEVFFDSDKVNNAKDILYVKPYSEKKIDISNRIIKKIKWAMIDDAGAKTKLYESIL.

An N-terminal signal peptide occupies residues Met-1–Glu-20.

Belongs to the periplasmic pilus chaperone family.

Its subcellular location is the periplasm. Functionally, involved in the biogenesis of the CS6 fimbria. In Escherichia coli, this protein is Chaperone protein CssC (cssC).